A 333-amino-acid chain; its full sequence is Glycerol-3-phosphate dehydrogenase [NAD(P)+] (333 aa).

Residues Phe-19, Arg-40, Arg-41, and Lys-113 each contribute to the NADPH site. Residues Lys-113 and Gly-141 each coordinate sn-glycerol 3-phosphate. Residue Ala-145 coordinates NADPH. The sn-glycerol 3-phosphate site is built by Lys-196, Asp-249, Ser-259, Arg-260, and Asn-261. The Proton acceptor role is filled by Lys-196. Residue Arg-260 coordinates NADPH. NADPH-binding residues include Val-282 and Glu-283.

The protein belongs to the NAD-dependent glycerol-3-phosphate dehydrogenase family.

It is found in the cytoplasm. It catalyses the reaction sn-glycerol 3-phosphate + NAD(+) = dihydroxyacetone phosphate + NADH + H(+). The enzyme catalyses sn-glycerol 3-phosphate + NADP(+) = dihydroxyacetone phosphate + NADPH + H(+). The protein operates within membrane lipid metabolism; glycerophospholipid metabolism. In terms of biological role, catalyzes the reduction of the glycolytic intermediate dihydroxyacetone phosphate (DHAP) to sn-glycerol 3-phosphate (G3P), the key precursor for phospholipid synthesis. The polypeptide is Glycerol-3-phosphate dehydrogenase [NAD(P)+] (Sinorhizobium fredii (strain NBRC 101917 / NGR234)).